The sequence spans 168 residues: Endoribonuclease YbeY (168 aa).

Residues His125, His129, and His135 each coordinate Zn(2+).

The protein belongs to the endoribonuclease YbeY family. Zn(2+) serves as cofactor.

It is found in the cytoplasm. In terms of biological role, single strand-specific metallo-endoribonuclease involved in late-stage 70S ribosome quality control and in maturation of the 3' terminus of the 16S rRNA. In Rhodopseudomonas palustris (strain BisB18), this protein is Endoribonuclease YbeY.